Reading from the N-terminus, the 138-residue chain is Acidic phospholipase A2 RV-7 (138 aa).

The N-terminal stretch at 1–16 is a signal peptide; sequence MRTLWIVAVCLIGVEG. 7 disulfide bridges follow: cysteine 42-cysteine 131, cysteine 44-cysteine 60, cysteine 59-cysteine 111, cysteine 65-cysteine 138, cysteine 66-cysteine 104, cysteine 73-cysteine 97, and cysteine 91-cysteine 102. Residues tyrosine 43, glycine 45, and glycine 47 each coordinate Ca(2+). Histidine 63 is a catalytic residue. Aspartate 64 lines the Ca(2+) pocket. Residue aspartate 105 is part of the active site.

The protein belongs to the phospholipase A2 family. Group II subfamily. D49 sub-subfamily. Heterodimer of a weakly toxic basic protein having phospholipase A2 activity (RV-4) and a non-toxic acidic protein which inhibits its enzymatic activity but potentiates its lethal potency and neurotoxicity (RV-7). Ca(2+) is required as a cofactor. As to expression, expressed by the venom gland.

It localises to the secreted. The catalysed reaction is a 1,2-diacyl-sn-glycero-3-phosphocholine + H2O = a 1-acyl-sn-glycero-3-phosphocholine + a fatty acid + H(+). In terms of biological role, heterodimer: RV-4/RV-7 targets the presynaptic sites of the neuromuscular junction. Its function is as follows. Monomer: snake venom phospholipase A2 (PLA2) RV-7 that has low enzymatic activity and is not toxic. It inhibits the enzymatic activity of RV-4 in vitro but potentiates its lethal potency and neurotoxicity. It may facilitate the specific binding of RV-4 to its presynaptic binding sites, probably by acting as a chaperone, minimizing distraction and destruction of RV-4 en route to the site of action by reducing non-specific binding to muscle and other organs. PLA2 catalyzes the calcium-dependent hydrolysis of the 2-acyl groups in 3-sn-phosphoglycerides. This Daboia siamensis (Eastern Russel's viper) protein is Acidic phospholipase A2 RV-7.